Consider the following 475-residue polypeptide: Ankyrin repeat, SAM and basic leucine zipper domain-containing protein 1 (475 aa).

Residues 1–24 (MAAGTVRGLAVAGGGESSESEDDG) are disordered. 3 positions are modified to phosphoserine: Ser17, Ser18, and Ser20. ANK repeat units lie at residues 45–74 (EKNE…SVDS), 78–107 (YGWT…NASF), 110–144 (DKQT…DPNV), 148–177 (RLMT…EVNA), 181–210 (NGYT…NKML), and 214–243 (DGKT…PLEG). Residues 272-334 (SYTAFGDLEI…KILAALKELE (63 aa)) form the SAM domain.

Interacts with DDX4, PIWIL1, RANBP9 and TDRD1.

Its subcellular location is the cytoplasm. Functionally, plays a central role during spermatogenesis by repressing transposable elements and preventing their mobilization, which is essential for the germline integrity. Acts via the piRNA metabolic process, which mediates the repression of transposable elements during meiosis by forming complexes composed of piRNAs and Piwi proteins and governs the methylation and subsequent repression of transposons. Its association with pi-bodies suggests a participation in the primary piRNAs metabolic process. Required prior to the pachytene stage to facilitate the production of multiple types of piRNAs, including those associated with repeats involved in the regulation of retrotransposons. May act by mediating protein-protein interactions during germ cell maturation. This is Ankyrin repeat, SAM and basic leucine zipper domain-containing protein 1 (ASZ1) from Neofelis nebulosa (Clouded leopard).